The chain runs to 302 residues: Small ribosomal subunit biogenesis GTPase RsgA (302 aa).

The CP-type G domain occupies 75–233 (KNELIRPAVS…IMDTPGFSSM (159 aa)). GTP contacts are provided by residues 124-127 (NKKD) and 175-183 (GPSGVGKSS). Residues Cys257, Cys262, His264, and Cys270 each contribute to the Zn(2+) site.

The protein belongs to the TRAFAC class YlqF/YawG GTPase family. RsgA subfamily. In terms of assembly, monomer. Associates with 30S ribosomal subunit, binds 16S rRNA. The cofactor is Zn(2+).

Its subcellular location is the cytoplasm. Its function is as follows. One of several proteins that assist in the late maturation steps of the functional core of the 30S ribosomal subunit. Helps release RbfA from mature subunits. May play a role in the assembly of ribosomal proteins into the subunit. Circularly permuted GTPase that catalyzes slow GTP hydrolysis, GTPase activity is stimulated by the 30S ribosomal subunit. The sequence is that of Small ribosomal subunit biogenesis GTPase RsgA from Agathobacter rectalis (strain ATCC 33656 / DSM 3377 / JCM 17463 / KCTC 5835 / VPI 0990) (Eubacterium rectale).